The primary structure comprises 311 residues: RNA polymerase sigma factor SigA4 (311 aa).

Positions 78–148 are sigma-70 factor domain-2; that stretch reads MLKANLRLVV…TRAIDNHART (71 aa). The Interaction with polymerase core subunit RpoC motif lies at 102-105; the sequence is DLIQ. The sigma-70 factor domain-3 stretch occupies residues 157–234; the sequence is EKISRIKKMT…DPKSLEPMDA (78 aa). The tract at residues 247–304 is sigma-70 factor domain-4; sequence WLAHLTEREQQVLQLRFGLHDGEQHTLAEIGRRLNVSRERIRQVEARALQKLRVLSQQ. Positions 273 to 292 form a DNA-binding region, H-T-H motif; the sequence is LAEIGRRLNVSRERIRQVEA.

It belongs to the sigma-70 factor family.

It is found in the cytoplasm. In terms of biological role, sigma factors are initiation factors that promote the attachment of RNA polymerase to specific initiation sites and are then released. The chain is RNA polymerase sigma factor SigA4 (sigA4) from Synechococcus elongatus (strain ATCC 33912 / PCC 7942 / FACHB-805) (Anacystis nidulans R2).